The following is a 256-amino-acid chain: Thiazole synthase (256 aa).

The Schiff-base intermediate with DXP role is filled by Lys-95. 1-deoxy-D-xylulose 5-phosphate contacts are provided by residues Gly-156, 182–183, and 204–205; these read AG and NT.

This sequence belongs to the ThiG family. As to quaternary structure, homotetramer. Forms heterodimers with either ThiH or ThiS.

The protein resides in the cytoplasm. The catalysed reaction is [ThiS sulfur-carrier protein]-C-terminal-Gly-aminoethanethioate + 2-iminoacetate + 1-deoxy-D-xylulose 5-phosphate = [ThiS sulfur-carrier protein]-C-terminal Gly-Gly + 2-[(2R,5Z)-2-carboxy-4-methylthiazol-5(2H)-ylidene]ethyl phosphate + 2 H2O + H(+). Its pathway is cofactor biosynthesis; thiamine diphosphate biosynthesis. In terms of biological role, catalyzes the rearrangement of 1-deoxy-D-xylulose 5-phosphate (DXP) to produce the thiazole phosphate moiety of thiamine. Sulfur is provided by the thiocarboxylate moiety of the carrier protein ThiS. In vitro, sulfur can be provided by H(2)S. The polypeptide is Thiazole synthase (Citrobacter koseri (strain ATCC BAA-895 / CDC 4225-83 / SGSC4696)).